The sequence spans 303 residues: UDP-3-O-acyl-N-acetylglucosamine deacetylase (303 aa).

Zn(2+) is bound by residues His78, His237, and Asp241. His264 (proton donor) is an active-site residue.

Belongs to the LpxC family. Zn(2+) serves as cofactor.

It carries out the reaction a UDP-3-O-[(3R)-3-hydroxyacyl]-N-acetyl-alpha-D-glucosamine + H2O = a UDP-3-O-[(3R)-3-hydroxyacyl]-alpha-D-glucosamine + acetate. Its pathway is glycolipid biosynthesis; lipid IV(A) biosynthesis; lipid IV(A) from (3R)-3-hydroxytetradecanoyl-[acyl-carrier-protein] and UDP-N-acetyl-alpha-D-glucosamine: step 2/6. Catalyzes the hydrolysis of UDP-3-O-myristoyl-N-acetylglucosamine to form UDP-3-O-myristoylglucosamine and acetate, the committed step in lipid A biosynthesis. The polypeptide is UDP-3-O-acyl-N-acetylglucosamine deacetylase (Pseudomonas aeruginosa (strain LESB58)).